The sequence spans 270 residues: Centriole, cilia and spindle-associated protein (270 aa).

N-acetylmethionine is present on methionine 1. The short motif at 9–15 (SEYMKRY) is the ST]-E-Y-X(3)-Y motif 1; required for efficient microtubule binding and stabilization element. Disordered stretches follow at residues 50–201 (DDWG…SQKT) and 231–255 (LVAQ…SSSE). Residues 53–67 (GPAGSSEDSASSESS) show a composition bias toward low complexity. Pro residues predominate over residues 75-86 (RCAPPSPPPPVE). A compositionally biased stretch (basic and acidic residues) spans 92–101 (EAERRARGAP). Acidic residues predominate over residues 102-118 (EEQDAEAGDAEAEDAED). Basic and acidic residues predominate over residues 127–144 (KDVEDKPEQQTRTRETDK). Over residues 145–156 (SPTSTEPRQQPS) the composition is skewed to polar residues. The ST]-E-Y-X(3)-Y motif 2; required for efficient microtubule binding and stabilization signature appears at 260–266 (TEYMRCY).

The protein belongs to the CCSAP family. As to quaternary structure, associates with microtubules; the association occurs on polyglutamylated tubulin.

It localises to the cytoplasm. The protein resides in the cytoskeleton. It is found in the microtubule organizing center. Its subcellular location is the centrosome. The protein localises to the centriole. It localises to the spindle. The protein resides in the cilium basal body. It is found in the cilium axoneme. Its subcellular location is the cell projection. The protein localises to the axon. It localises to the cilium. Plays a role in microtubule (MT) stabilization and this stabilization involves the maintenance of NUMA1 at the spindle poles. Colocalizes with polyglutamylated MTs to promote MT stabilization and regulate bipolar spindle formation in mitosis. Binding of CCSAP to centrosomes and the spindle around centrosomes during mitosis inhibits MT depolymerization, thereby stabilizing the mitotic spindle. May play a role in embryonic development. May be required for proper cilia beating. The protein is Centriole, cilia and spindle-associated protein (CCSAP) of Homo sapiens (Human).